A 170-amino-acid polypeptide reads, in one-letter code: Adenine phosphoribosyltransferase (170 aa).

The protein belongs to the purine/pyrimidine phosphoribosyltransferase family. In terms of assembly, homodimer.

Its subcellular location is the cytoplasm. The catalysed reaction is AMP + diphosphate = 5-phospho-alpha-D-ribose 1-diphosphate + adenine. Its pathway is purine metabolism; AMP biosynthesis via salvage pathway; AMP from adenine: step 1/1. Its function is as follows. Catalyzes a salvage reaction resulting in the formation of AMP, that is energically less costly than de novo synthesis. The polypeptide is Adenine phosphoribosyltransferase (Thermosynechococcus vestitus (strain NIES-2133 / IAM M-273 / BP-1)).